Here is a 1154-residue protein sequence, read N- to C-terminus: CRISPR-associated endoribonuclease Cas13a (1154 aa).

HEPN-like fold regions lie at residues 330 to 466 (TTSN…RFIN) and 923 to 1154 (FVHL…EMKK).

It belongs to the CRISPR-associated endoribonuclease Cas13a family. A divalent metal cation serves as cofactor.

With respect to regulation, target RNA acts as an activator for non-specific ssRNA degradation. CRISPR (clustered regularly interspaced short palindromic repeat), is an adaptive immune system that provides protection against mobile genetic elements (viruses, transposable elements and conjugative plasmids). CRISPR clusters contain sequences complementary to antecedent mobile elements and target invading nucleic acids. Unlike many single-component effectors, this CRISPR-Cas system targets RNA. CRISPR clusters are transcribed from pre-CRISPR RNA (crRNA) and processed into crRNA by this protein. Cleaves linear target ssRNA in a pre-crRNA-dependent fashion, preferentially before U residues. Binding a viable target RNA target activates this protein for non-specific RNA degradation in vitro (called collateral RNA degradation), which is fairly sensitive as it requires picomolar levels of viable target RNA. In Paludibacter propionicigenes (strain DSM 17365 / JCM 13257 / WB4), this protein is CRISPR-associated endoribonuclease Cas13a.